Reading from the N-terminus, the 463-residue chain is MSAGGPCPAGAGGGPGGSSCPVGVSPGGVSMFRWLEVLEKEFDKAFVDVDLLLGEIDPDQADITYEGRQKMTSLSSCFAQLCHKAQTVSQINHKLEAQLVDLRSELTETQAEKVVLEKEVHEQLLQLHSTQLQLHAKTGQSVDSGAIKAKLSVHSVEDLERELEANKTEKVKEARLEAEVKLLRKENEALRRHIAVLQAEVYGARLAAKYLDKELAGRVQQIQLLGRDMKGPAHDKLWNQLEAEIHLHRHKTVIRACRGRNDLKRPMQAPPGHDQDSLKKSQGVGPIRKVLLLKEDHEGLGISITGGKEHGVPILISEIHPGQPADRCGGLHVGDAILAVNGVNLRDTKHKEAVTILSQQRGEIEFEVVYVAPEVDSDDENVEYEDESGHRYRLYLDELEGSGNSGASCKDSSGEMKMLQGYNKKAVRDAHENGDVGAAGESPLDDTAARAAHLHSLHQKKAY.

S2 is modified (N-acetylserine). A coiled-coil region spans residues A85–V201. A PDZ domain is found at K289–A372. 2 positions are modified to phosphoserine: S402 and S405.

In terms of assembly, homooligomer. Interacts with FZD5. Interacts with FZD8. Interacts with GRID2 and BECN1. Interacts with CSPG5. Interacts with CLCN3. Interacts with STX6. Interacts with CFTR. Interacts with ASIC3. Interacts with GOLGA3. Interacts with NLGN1. Interacts with RHOQ. Interacts with MARCHF2; the interaction leads to CFTR ubiquitination and degradation. May interact with CACNG2. Interacts with CCDC62. As to expression, ubiquitously expressed (at protein level). Expressed in dorsal root glanglion (DRG), spinal cord and brain. Isoform 1 is preferentially expressed in whole brain (at protein level) and cerebellum. Expressed in spermatocytes and spermatides but not in Sertoli cells and spermatogonia.

Its subcellular location is the cytoplasm. It localises to the golgi apparatus membrane. The protein resides in the golgi apparatus. It is found in the trans-Golgi network membrane. The protein localises to the synapse. Its subcellular location is the postsynaptic density. It localises to the cell projection. The protein resides in the dendrite. Functionally, plays a role in intracellular protein trafficking and degradation. May regulate CFTR chloride currents and acid-induced ASIC3 currents by modulating cell surface expression of both channels. May also regulate the intracellular trafficking of the ADR1B receptor. May play a role in autophagy. Together with MARCHF2 mediates the ubiquitination and lysosomal degradation of CFTR. Overexpression results in CFTR intracellular retention and degradation in the lysosomes. The protein is Golgi-associated PDZ and coiled-coil motif-containing protein of Mus musculus (Mouse).